Here is a 118-residue protein sequence, read N- to C-terminus: Putative pterin-4-alpha-carbinolamine dehydratase (118 aa).

It belongs to the pterin-4-alpha-carbinolamine dehydratase family.

It carries out the reaction (4aS,6R)-4a-hydroxy-L-erythro-5,6,7,8-tetrahydrobiopterin = (6R)-L-erythro-6,7-dihydrobiopterin + H2O. The chain is Putative pterin-4-alpha-carbinolamine dehydratase from Xanthomonas campestris pv. campestris (strain 8004).